Here is a 243-residue protein sequence, read N- to C-terminus: Terpene cyclase janB (243 aa).

A run of 7 helical transmembrane segments spans residues 19–39, 48–68, 77–97, 112–132, 134–154, 172–194, and 205–225; these read LADL…VGMV, YGMA…YCVF, LGVF…AIIF, LPWI…ALAA, IGPS…LSVG, LWLS…WMYW, and LVLW…VCFW.

It belongs to the paxB family.

Its subcellular location is the membrane. It functions in the pathway secondary metabolite biosynthesis. Functionally, terpene cyclase; part of the gene cluster that mediates the biosynthesis of the indole diterpenes janthitremanes such as shearinine K or shearinine A. The geranylgeranyl diphosphate (GGPP) synthase janG catalyzes the first step in janthitremane biosynthesis via conversion of farnesyl pyrophosphate and isopentyl pyrophosphate into geranylgeranyl pyrophosphate (GGPP). Condensation of indole-3-glycerol phosphate with GGPP by the prenyl transferase janC then forms 3-geranylgeranylindole (3-GGI). Epoxidation by the FAD-dependent monooxygenase janM leads to a epoxidized-GGI that is substrate of the terpene cyclase janB for cyclization to yield paspaline. Paspaline is subsequently converted to 13-desoxypaspaline by the cytochrome P450 monooxygenase janP, via beta-PC-M6 in a series of alpha-face oxidations. The cytochrome P450 monooxygenase janQ is proposed to carry out sequential beta-face oxidation steps at C-7 and C-13 of 13-desoxypaspaline to form paspalicine and paspalinine respectively. The indole diterpene prenyltransferase janD may then convert paspalinine into shearinine K which is substrate of janO and/or additional enzymes for oxidation and cyclization to generate shearinine A. This is Terpene cyclase janB from Penicillium janthinellum (Penicillium vitale).